Here is a 49-residue protein sequence, read N- to C-terminus: Large ribosomal subunit protein bL33B (49 aa).

Belongs to the bacterial ribosomal protein bL33 family.

This chain is Large ribosomal subunit protein bL33B, found in Oceanobacillus iheyensis (strain DSM 14371 / CIP 107618 / JCM 11309 / KCTC 3954 / HTE831).